The chain runs to 184 residues: Autophagy-related protein 101 (184 aa).

This sequence belongs to the ATG101 family. Component of the atg1 kinase complex composed of at least atg1, atg13, atg17 and atg101. Interacts directly with atg13.

The protein localises to the cytoplasm. It localises to the nucleus. The protein resides in the preautophagosomal structure membrane. Functionally, autophagy factor required for autophagosome formation. Component of the atg1 kinase complex in which it stabilizes atg13. Is also responsible for recruiting downstream factors to the autophagosome-formation site. Has a role in meiosis and sporulation. The polypeptide is Autophagy-related protein 101 (Schizosaccharomyces pombe (strain 972 / ATCC 24843) (Fission yeast)).